A 261-amino-acid chain; its full sequence is Cytochrome c oxidase subunit 3 (261 aa).

The Mitochondrial matrix portion of the chain corresponds to 1 to 15 (MTHQTHAYHMVNPSP). Residues 16–34 (WPLTGALSALLLTSGLIMW) traverse the membrane as a helical segment. Topologically, residues 35–40 (FHFNSF) are mitochondrial intermembrane. Residues 41–66 (LLVIIGLTCMLLTMYQWWRDIVREGT) form a helical membrane-spanning segment. At 67 to 72 (FQGHHT) the chain is on the mitochondrial matrix side. A helical membrane pass occupies residues 73–105 (PVVQKGLRYGMVLFIVSEVFFFLGFFWAFYHSS). The Mitochondrial intermembrane segment spans residues 106-128 (LAPTPELGGCWPPTGIHPLNPLE). The helical transmembrane segment at 129 to 152 (VPLLNTSILLASGVSITWAHHSLM) threads the bilayer. At 153-155 (EGN) the chain is on the mitochondrial matrix side. A helical membrane pass occupies residues 156–183 (RKQMIQALSITILLGIYFTILQASEYYE). Topologically, residues 184-190 (SSFTISD) are mitochondrial intermembrane. The chain crosses the membrane as a helical span at residues 191–223 (GVYGSTFFVATGFHGLHVIIGTTFLIVCLLRQF). Topologically, residues 224-232 (NFHFTSTHH) are mitochondrial matrix. Residues 233 to 256 (FGFEAAAWYWHFVDVVWLFLYVSI) traverse the membrane as a helical segment. The Mitochondrial intermembrane portion of the chain corresponds to 257–261 (YWWGS).

This sequence belongs to the cytochrome c oxidase subunit 3 family. As to quaternary structure, component of the cytochrome c oxidase (complex IV, CIV), a multisubunit enzyme composed of 14 subunits. The complex is composed of a catalytic core of 3 subunits MT-CO1, MT-CO2 and MT-CO3, encoded in the mitochondrial DNA, and 11 supernumerary subunits COX4I, COX5A, COX5B, COX6A, COX6B, COX6C, COX7A, COX7B, COX7C, COX8 and NDUFA4, which are encoded in the nuclear genome. The complex exists as a monomer or a dimer and forms supercomplexes (SCs) in the inner mitochondrial membrane with NADH-ubiquinone oxidoreductase (complex I, CI) and ubiquinol-cytochrome c oxidoreductase (cytochrome b-c1 complex, complex III, CIII), resulting in different assemblies (supercomplex SCI(1)III(2)IV(1) and megacomplex MCI(2)III(2)IV(2)).

It is found in the mitochondrion inner membrane. The catalysed reaction is 4 Fe(II)-[cytochrome c] + O2 + 8 H(+)(in) = 4 Fe(III)-[cytochrome c] + 2 H2O + 4 H(+)(out). Component of the cytochrome c oxidase, the last enzyme in the mitochondrial electron transport chain which drives oxidative phosphorylation. The respiratory chain contains 3 multisubunit complexes succinate dehydrogenase (complex II, CII), ubiquinol-cytochrome c oxidoreductase (cytochrome b-c1 complex, complex III, CIII) and cytochrome c oxidase (complex IV, CIV), that cooperate to transfer electrons derived from NADH and succinate to molecular oxygen, creating an electrochemical gradient over the inner membrane that drives transmembrane transport and the ATP synthase. Cytochrome c oxidase is the component of the respiratory chain that catalyzes the reduction of oxygen to water. Electrons originating from reduced cytochrome c in the intermembrane space (IMS) are transferred via the dinuclear copper A center (CU(A)) of subunit 2 and heme A of subunit 1 to the active site in subunit 1, a binuclear center (BNC) formed by heme A3 and copper B (CU(B)). The BNC reduces molecular oxygen to 2 water molecules using 4 electrons from cytochrome c in the IMS and 4 protons from the mitochondrial matrix. The protein is Cytochrome c oxidase subunit 3 (MT-CO3) of Osphranter robustus (Wallaroo).